We begin with the raw amino-acid sequence, 1049 residues long: Bifunctional cytochrome P450/NADPH--P450 reductase (1049 aa).

Residues 2-472 (TIKEMPQPKT…STEQSAKKVR (471 aa)) are cytochrome P450. Tyr52 is a (9Z)-hexadecenoate binding site. Heme is bound at residue Cys401. The tract at residues 473 to 1049 (KKAENAHNTP…GRYAKDVWAG (577 aa)) is NADPH--P450 reductase. The Flavodoxin-like domain maps to 483–622 (LLVLYGSNMG…TYEEWREHMW (140 aa)). FMN is bound by residues 489 to 494 (SNMGTA), 536 to 539 (SYNG), 570 to 572 (CGD), and 578 to 580 (TYQ). Positions 660 to 892 (HGAFSTNVVA…STPQSEFTLP (233 aa)) constitute an FAD-binding FR-type domain.

The protein in the N-terminal section; belongs to the cytochrome P450 family. FAD serves as cofactor. Requires FMN as cofactor. The cofactor is heme.

Its subcellular location is the cytoplasm. The catalysed reaction is 2 oxidized [cytochrome P450] + NADPH = 2 reduced [cytochrome P450] + NADP(+) + H(+). It carries out the reaction an organic molecule + reduced [NADPH--hemoprotein reductase] + O2 = an alcohol + oxidized [NADPH--hemoprotein reductase] + H2O + H(+). Its activity is regulated as follows. Inhibited by N-(12-imidazolyl-dodecanoyl)-L-leucine. Functionally, functions as a fatty acid monooxygenase. Catalyzes hydroxylation of fatty acids at omega-1, omega-2 and omega-3 positions. Shows activity toward medium and long-chain fatty acids, with optimum chain lengths of 12, 14 and 16 carbons (lauric, myristic, and palmitic acids). Able to metabolize some of these primary metabolites to secondary and tertiary products. Marginal activity towards short chain lengths of 8-10 carbons. Hydroxylates highly branched fatty acids, which play an essential role in membrane fluidity regulation. Also displays a NADPH-dependent reductase activity in the C-terminal domain, which allows electron transfer from NADPH to the heme iron of the cytochrome P450 N-terminal domain. Involved in inactivation of quorum sensing signals of other competing bacteria by oxidazing efficiently acyl homoserine lactones (AHLs), molecules involved in quorum sensing signaling pathways, and their lactonolysis products acyl homoserines (AHs). This Priestia megaterium (strain ATCC 14581 / DSM 32 / CCUG 1817 / JCM 2506 / NBRC 15308 / NCIMB 9376 / NCTC 10342 / NRRL B-14308 / VKM B-512 / Ford 19) (Bacillus megaterium) protein is Bifunctional cytochrome P450/NADPH--P450 reductase.